The primary structure comprises 207 residues: LexA repressor (207 aa).

A DNA-binding region (H-T-H motif) is located at residues 28–48; that stretch reads RAEISRELGFKSANAAEEHLK. Residues Ser123 and Lys160 each act as for autocatalytic cleavage activity in the active site.

Belongs to the peptidase S24 family. As to quaternary structure, homodimer.

The enzyme catalyses Hydrolysis of Ala-|-Gly bond in repressor LexA.. Represses a number of genes involved in the response to DNA damage (SOS response), including recA and lexA. In the presence of single-stranded DNA, RecA interacts with LexA causing an autocatalytic cleavage which disrupts the DNA-binding part of LexA, leading to derepression of the SOS regulon and eventually DNA repair. This Haemophilus influenzae (strain ATCC 51907 / DSM 11121 / KW20 / Rd) protein is LexA repressor.